We begin with the raw amino-acid sequence, 107 residues long: U-scoloptoxin(19)-Sm1a (107 aa).

A signal peptide spans 1-20 (MRFLVSVAFLLTVSSLLVSG).

The protein belongs to the scoloptoxin-19 family. Post-translationally, contains 6 disulfide bonds. As to expression, expressed by the venom gland.

Its subcellular location is the secreted. The polypeptide is U-scoloptoxin(19)-Sm1a (Scolopendra morsitans (Tanzanian blue ringleg centipede)).